Here is a 488-residue protein sequence, read N- to C-terminus: Rhamnulokinase (488 aa).

13-17 (ASSGR) contributes to the ATP binding site. An intrachain disulfide couples Cys68 to Cys222. Residues Gly83 and 236-238 (HDT) contribute to the substrate site. The active-site Proton acceptor is Asp237. Residue Thr259 coordinates ATP. Asn296 serves as a coordination point for substrate. Residue Gln304 participates in ATP binding. An intrachain disulfide couples Cys353 to Cys370. Gly402 serves as a coordination point for ATP. The cysteines at positions 413 and 417 are disulfide-linked.

The protein belongs to the rhamnulokinase family. Mg(2+) is required as a cofactor.

The enzyme catalyses L-rhamnulose + ATP = L-rhamnulose 1-phosphate + ADP + H(+). It functions in the pathway carbohydrate degradation; L-rhamnose degradation; glycerone phosphate from L-rhamnose: step 2/3. Involved in the catabolism of L-rhamnose (6-deoxy-L-mannose). Catalyzes the transfer of the gamma-phosphate group from ATP to the 1-hydroxyl group of L-rhamnulose to yield L-rhamnulose 1-phosphate. The sequence is that of Rhamnulokinase from Klebsiella pneumoniae subsp. pneumoniae (strain ATCC 700721 / MGH 78578).